We begin with the raw amino-acid sequence, 394 residues long: Probable sugar efflux transporter (394 aa).

The next 12 membrane-spanning stretches (helical) occupy residues 15 to 35 (VLMLAIAAFIFNTTEFVPVGL), 50 to 70 (VGLMLTIYAWVVALMSLPMML), 79 to 99 (MLLMIIFVMFVASHALSSVAW), 109 to 129 (IGIALSHAIFWSITASLAIRV), 137 to 157 (QALSMMATGTALAMVLGLPIG), 168 to 188 (ITFAVIGAVAFVTMLLLLKLL), 209 to 229 (PALVALYLLIAITVTAHYTAY), 249 to 269 (FLLLIFGAAGIVGSVLFSIYG), 272 to 292 (FPATFLLAAIGLITLSMMCLY), 299 to 319 (LAVSTLCVIWGIAVMVMGLAV), 333 to 353 (VAMSLLSGIYNIGIGAGALLG), and 362 to 382 (MASVGYVGGAIGILSLLWCAW).

Belongs to the major facilitator superfamily. SotB (TC 2.A.1.2) family.

It localises to the cell inner membrane. Functionally, involved in the efflux of sugars. The physiological role may be the reduction of the intracellular concentration of toxic sugars or sugar metabolites. The sequence is that of Probable sugar efflux transporter from Erwinia tasmaniensis (strain DSM 17950 / CFBP 7177 / CIP 109463 / NCPPB 4357 / Et1/99).